A 724-amino-acid chain; its full sequence is Probable dipeptidyl-peptidase 5 (724 aa).

An N-terminal signal peptide occupies residues 1 to 19 (MGALTWLSVVAAAASTALA). Residues N76, N97, N154, N257, N383, and N453 are each glycosylated (N-linked (GlcNAc...) asparagine). The active-site Charge relay system is the S563. An N-linked (GlcNAc...) asparagine glycan is attached at N610. Active-site charge relay system residues include D646 and H678.

The protein belongs to the peptidase S9C family.

The protein localises to the secreted. Extracellular dipeptidyl-peptidase which removes N-terminal dipeptides sequentially from polypeptides having unsubstituted N-termini. The polypeptide is Probable dipeptidyl-peptidase 5 (dpp5) (Aspergillus clavatus (strain ATCC 1007 / CBS 513.65 / DSM 816 / NCTC 3887 / NRRL 1 / QM 1276 / 107)).